The primary structure comprises 1147 residues: Sterol regulatory element-binding protein 1 (1147 aa).

The segment at 1–60 (MDEPPFSEAALEQALGEPCDLDAALLTDIEDMLQLINNQDSDFPGLFDPPYAGSGAGGTD) is transcriptional activation (acidic). Residues 1 to 487 (MDEPPFSEAA…HSRGMLDRSR (487 aa)) are Cytoplasmic-facing. A 9aaTAD motif is present at residues 27-35 (TDIEDMLQL). The disordered stretch occupies residues 39–193 (QDSDFPGLFD…PLPGLPLASP (155 aa)). Composition is skewed to low complexity over residues 62–71 (ASPDTSSPGS) and 78–95 (TLSSSLEAFLSGPQAAPS). The span at 96–105 (PLSPPQPAPT) shows a compositional bias: pro residues. Residues serine 98 and serine 117 each carry the phosphoserine modification. Positions 170 to 190 (GGFSTGSPPGNTQQPLPGLPL) are enriched in low complexity. Residues 234-497 (QQVPVLLQPH…LALCTLVFLC (264 aa)) form an interaction with LMNA region. In terms of domain architecture, bHLH spans 323 to 373 (EKRTAHNAIEKRYRSSINDKIIELKDLVVGTEAKLNKSAVLRKAIDYIRFL). Phosphoserine; by SIK1 occurs at positions 337 and 338. Positions 373-394 (LQHSNQKLKQENLSLRTAVHKS) are leucine-zipper. Serine 396 carries the phosphoserine; by AMPK modification. Serine 402 carries the post-translational modification Phosphoserine; by SIK1. Residues 421–479 (VEDTLTPPPSDAGSPFQSSPLSLGSRGSGSGGSGSDSEPDSPVFEDSKAKPEQRPSLHS) are disordered. Serine 457 carries the phosphoserine modification. Over residues 465 to 479 (EDSKAKPEQRPSLHS) the composition is skewed to basic and acidic residues. The helical transmembrane segment at 488-508 (LALCTLVFLCLSCNPLASLLG) threads the bilayer. At 509–547 (ARGLPSPSDTTSVYHSPGRNVLGTESRDGPGWAQWLLPP) the chain is on the lumenal side. Residues 548–568 (VVWLLNGLLVLVSLVLLFVYG) form a helical membrane-spanning segment. Residues 569–1147 (EPVTRPHSGP…LGGGTTVTSS (579 aa)) are Cytoplasmic-facing. Serine 1060 carries the phosphoserine modification.

Belongs to the SREBP family. In terms of assembly, forms a tight complex with SCAP, the SCAP-SREBP complex, in the endoplasmic reticulum membrane and the Golgi apparatus. Interacts with PAQR3; the interaction anchors the SCAP-SREBP complex to the Golgi apparatus in low cholesterol conditions. Efficient DNA binding of the soluble transcription factor fragment requires dimerization with another bHLH protein. Interacts with CEBPA, the interaction produces a transcriptional synergy. Interacts with LMNA. In terms of processing, processed in the Golgi apparatus, releasing the protein from the membrane. At low cholesterol the SCAP-SREBP complex is recruited into COPII vesicles for export from the endoplasmic reticulum. In the Golgi, complex SREBPs are cleaved sequentially by site-1 (MBTPS1, S1P) and site-2 (MBTPS2, S2P) protease. The first cleavage by site-1 protease occurs within the luminal loop, the second cleavage by site-2 protease occurs within the first transmembrane domain, releasing the transcription factor from the Golgi membrane. Phosphorylated by AMPK, leading to suppress protein processing and nuclear translocation, and repress target gene expression. Phosphorylation at Ser-402 by SIK1 represses activity possibly by inhibiting DNA-binding. Post-translationally, SCAP-free SREBF1 is ubiquitinated by the BCR(ARMC5) complex, leading to its degradation. In terms of processing, ubiquitinated; the nuclear form has a rapid turnover and is rapidly ubiquitinated and degraded by the proteasome in the nucleus. In terms of tissue distribution, expressed in a wide variety of tissues, most abundant in liver and adrenal gland. In fetal tissues lung and liver shows highest expression. As to expression, predominates in hepatoma cell lines. Also expressed in kidney, brain, white fat, and muscle. Predominantly expressed in liver and adipose tissues. Also expressed in kidney, brain, white fat, and muscle.

The protein resides in the endoplasmic reticulum membrane. It localises to the golgi apparatus membrane. Its subcellular location is the cytoplasmic vesicle. The protein localises to the COPII-coated vesicle membrane. It is found in the nucleus. With respect to regulation, activation by cleavage is down-regulated upon activation of SIRT3-dependent PRKAA1/AMPK-alpha signaling cascade which leads to inhibition of ATP-consuming lipogenesis to restore cellular energy balance. Precursor of the transcription factor form (Processed sterol regulatory element-binding protein 1), which is embedded in the endoplasmic reticulum membrane. Low sterol concentrations promote processing of this form, releasing the transcription factor form that translocates into the nucleus and activates transcription of genes involved in cholesterol biosynthesis and lipid homeostasis. Its function is as follows. Key transcription factor that regulates expression of genes involved in cholesterol biosynthesis and lipid homeostasis. Binds to the sterol regulatory element 1 (SRE-1) (5'-ATCACCCCAC-3'). Has dual sequence specificity binding to both an E-box motif (5'-ATCACGTGA-3') and to SRE-1 (5'-ATCACCCCAC-3'). Regulates the promoters of genes involved in cholesterol biosynthesis and the LDL receptor (LDLR) pathway of sterol regulation. In terms of biological role, isoform expressed only in select tissues, which has higher transcriptional activity compared to SREBP-1C. Able to stimulate both lipogenic and cholesterogenic gene expression. Has a role in the nutritional regulation of fatty acids and triglycerides in lipogenic organs such as the liver. Required for innate immune response in macrophages by regulating lipid metabolism. Functionally, predominant isoform expressed in most tissues, which has weaker transcriptional activity compared to isoform SREBP-1A. Primarily controls expression of lipogenic gene. Strongly activates global lipid synthesis in rapidly growing cells. The absence of Golgi proteolytic processing requirement makes this isoform constitutively active in transactivation of lipogenic gene promoters. This Homo sapiens (Human) protein is Sterol regulatory element-binding protein 1.